Reading from the N-terminus, the 142-residue chain is MATYMANAKTVSPRWLLVNAEGKTLGRLASRIAAILRGKHKAEFTPHVDAGDFVVVINVDKLKITGNKTQDKQYHHHSGYPGGLKTINFADLQAKKPQRILELAIKGMLPKGPLGRQLYRKLKIYAGDQHPHQAQQPELIDL.

The protein belongs to the universal ribosomal protein uL13 family. As to quaternary structure, part of the 50S ribosomal subunit.

Its function is as follows. This protein is one of the early assembly proteins of the 50S ribosomal subunit, although it is not seen to bind rRNA by itself. It is important during the early stages of 50S assembly. The chain is Large ribosomal subunit protein uL13 from Coxiella burnetii (strain CbuG_Q212) (Coxiella burnetii (strain Q212)).